The primary structure comprises 727 residues: Catalase-peroxidase (727 aa).

The disordered stretch occupies residues 1–26; that stretch reads MDTKVETGGKCPVAHGPAGAKGRGNR. The tryptophyl-tyrosyl-methioninium (Trp-Tyr) (with M-245) cross-link spans 97–219; it reads WHSAGTYRIT…LGAVQMGLIY (123 aa). His-98 (proton acceptor) is an active-site residue. Positions 219-245 form a cross-link, tryptophyl-tyrosyl-methioninium (Tyr-Met) (with W-97); sequence YVNPEGPNGNPDPIAAARDIRETFSRM. His-260 provides a ligand contact to heme b.

The protein belongs to the peroxidase family. Peroxidase/catalase subfamily. In terms of assembly, homodimer or homotetramer. Heme b serves as cofactor. In terms of processing, formation of the three residue Trp-Tyr-Met cross-link is important for the catalase, but not the peroxidase activity of the enzyme.

The enzyme catalyses H2O2 + AH2 = A + 2 H2O. It carries out the reaction 2 H2O2 = O2 + 2 H2O. Bifunctional enzyme with both catalase and broad-spectrum peroxidase activity. The protein is Catalase-peroxidase of Allorhizobium ampelinum (strain ATCC BAA-846 / DSM 112012 / S4) (Agrobacterium vitis (strain S4)).